The primary structure comprises 228 residues: Sec-independent protein translocase protein TatB (228 aa).

A helical transmembrane segment spans residues 1–21; that stretch reads MFDFGLGELVFVGIIALIVLG. Disordered stretches follow at residues 126 to 162 and 196 to 228; these read LSDG…AETD and VPHT…VRKS. Residues 206–228 are compositionally biased toward basic residues; that stretch reads AISRKRGLRPKHRAKPKLRVRKS.

It belongs to the TatB family. In terms of assembly, the Tat system comprises two distinct complexes: a TatABC complex, containing multiple copies of TatA, TatB and TatC subunits, and a separate TatA complex, containing only TatA subunits. Substrates initially bind to the TatABC complex, which probably triggers association of the separate TatA complex to form the active translocon.

The protein resides in the cell inner membrane. Its function is as follows. Part of the twin-arginine translocation (Tat) system that transports large folded proteins containing a characteristic twin-arginine motif in their signal peptide across membranes. Together with TatC, TatB is part of a receptor directly interacting with Tat signal peptides. TatB may form an oligomeric binding site that transiently accommodates folded Tat precursor proteins before their translocation. The protein is Sec-independent protein translocase protein TatB of Neisseria meningitidis serogroup C / serotype 2a (strain ATCC 700532 / DSM 15464 / FAM18).